Reading from the N-terminus, the 177-residue chain is MAKCKEEVFNWEDEEQEEIIWVSKSEIKRDAEALKKLGEKLVNLTKTNLDKIPLDTGLRDAVELAQRLQKEALRRQIQYIGKLLRAIDPEPIQEALNKIENKHQQQQAKLHKLELLRDELVQKGNSAFTELLIQYPHADRQHLHNLIRSAQKEREQNKPPKSYREIFQYLKDLILED.

It belongs to the DarP family.

Its subcellular location is the cytoplasm. Functionally, member of a network of 50S ribosomal subunit biogenesis factors which assembles along the 30S-50S interface, preventing incorrect 23S rRNA structures from forming. Promotes peptidyl transferase center (PTC) maturation. The sequence is that of Dual-action ribosomal maturation protein DarP from Histophilus somni (strain 2336) (Haemophilus somnus).